The chain runs to 421 residues: MSRTVMERIEYEMHTPDPKADPDKLHFVQIDEAKCIGCDTCSQYCPTAAIFGEMGEPHSIPHIEACINCGQCLTHCPENAIYEAQSWVPEVEKKLKDGKVKCIAMPAPAVRYALGDAFGMPVGSVTTGKMLAALQKLGFAHCWDTEFTADVTIWEEGSEFVERLTKKSDMPLPQFTSCCPGWQKYAETYYPELLPHFSTCKSPIGMNGALAKTYGAERMKYDPKQVYTVSIMPCIAKKYEGLRPELKSSGMRDIDATLTTRELAYMIKKAGIDFAKLPDGKRDSLMGESTGGATIFGVTGGVMEAALRFAYEAVTGKKPDSWDFKAVRGLDGIKEATVNVGGTDVKVAVVHGAKRFKQVCDDVKAGKSPYHFIEYMACPGGCVCGGGQPVMPGVLEAMDRTTTRLYAGLKKRLAMASANKA.

2 4Fe-4S ferredoxin-type domains span residues 26-57 (HFVQIDEAKCIGCDTCSQYCPTAAIFGEMGEP) and 59-86 (SIPHIEACINCGQCLTHCPENAIYEAQS). [4Fe-4S] cluster-binding residues include Cys-35, Cys-38, Cys-41, Cys-45, Cys-66, Cys-69, Cys-72, Cys-76, Cys-179, Cys-234, Cys-378, and Cys-382. Residue Cys-382 coordinates Fe(2+).

Heterodimer of a large and a small subunit. [4Fe-4S] cluster is required as a cofactor. Fe(2+) serves as cofactor.

Its subcellular location is the periplasm. It catalyses the reaction H2 + 2 oxidized [2Fe-2S]-[ferredoxin] = 2 reduced [2Fe-2S]-[ferredoxin] + 2 H(+). May be involved in hydrogen uptake for the reduction of sulfate to hydrogen sulfide in an electron transport chain. Cytochrome c3 is likely to be the physiological electron carrier for the enzyme. This chain is Periplasmic [Fe] hydrogenase large subunit (hydA), found in Nitratidesulfovibrio vulgaris (strain ATCC 29579 / DSM 644 / CCUG 34227 / NCIMB 8303 / VKM B-1760 / Hildenborough) (Desulfovibrio vulgaris).